Consider the following 645-residue polypeptide: Sodium-dependent nutrient amino acid transporter 1 (645 aa).

Residues 1–48 (MELKTMPHNGANGSPQHNNNNNSNNNNNVSSDTKTDNNEKEAQKKDEG) form a disordered region. Topologically, residues 1 to 51 (MELKTMPHNGANGSPQHNNNNNSNNNNNVSSDTKTDNNEKEAQKKDEGRTN) are cytoplasmic. Low complexity predominate over residues 18 to 32 (NNNNNSNNNNNVSSD). Over residues 33–48 (TKTDNNEKEAQKKDEG) the composition is skewed to basic and acidic residues. Transmembrane regions (helical) follow at residues 52 to 72 (WSNG…LGNV), 85 to 105 (GAFL…MYYL), and 138 to 158 (TICI…YLFV). N-linked (GlcNAc...) asparagine glycosylation is found at asparagine 191 and asparagine 205. 7 helical membrane passes run 234-254 (IPDW…FLVI), 264-284 (AAYF…GRAV), 313-333 (AVVQ…MFAS), 347-367 (IVTT…FAIL), 407-427 (LFSV…IVAL), 454-474 (CGFL…LTLV), and 480-500 (TYVV…IYGL). N-linked (GlcNAc...) asparagine glycosylation is present at asparagine 514. 2 consecutive transmembrane segments (helical) span residues 522-542 (CWSF…MATI) and 559-579 (AGWL…WWYI).

Belongs to the sodium:neurotransmitter symporter (SNF) (TC 2.A.22) family.

It is found in the membrane. Unusual broad substrate spectrum amino acid:sodium cotransporter that promotes absorption of the D isomers of essential amino acids. Neutral amino acids are the preferred substrates, especially methionine and phenylalanine. The polypeptide is Sodium-dependent nutrient amino acid transporter 1 (Drosophila mojavensis (Fruit fly)).